Here is a 500-residue protein sequence, read N- to C-terminus: Aspartyl/glutamyl-tRNA(Asn/Gln) amidotransferase subunit B (500 aa).

It belongs to the GatB/GatE family. GatB subfamily. Heterotrimer of A, B and C subunits.

It carries out the reaction L-glutamyl-tRNA(Gln) + L-glutamine + ATP + H2O = L-glutaminyl-tRNA(Gln) + L-glutamate + ADP + phosphate + H(+). It catalyses the reaction L-aspartyl-tRNA(Asn) + L-glutamine + ATP + H2O = L-asparaginyl-tRNA(Asn) + L-glutamate + ADP + phosphate + 2 H(+). Allows the formation of correctly charged Asn-tRNA(Asn) or Gln-tRNA(Gln) through the transamidation of misacylated Asp-tRNA(Asn) or Glu-tRNA(Gln) in organisms which lack either or both of asparaginyl-tRNA or glutaminyl-tRNA synthetases. The reaction takes place in the presence of glutamine and ATP through an activated phospho-Asp-tRNA(Asn) or phospho-Glu-tRNA(Gln). This Clavibacter michiganensis subsp. michiganensis (strain NCPPB 382) protein is Aspartyl/glutamyl-tRNA(Asn/Gln) amidotransferase subunit B.